Here is a 689-residue protein sequence, read N- to C-terminus: Long-chain fatty acid transport protein 5 (689 aa).

Residues 1–29 (MGIWKKLTLLLLLLLLVGLGQPPWPAAMA) lie on the Cytoplasmic side of the membrane. The next 2 membrane-spanning stretches (helical) occupy residues 30-50 (LALRWFLGDPTCLVLLGLALL) and 55-75 (ISSWMPHWLSLVGAALTLFLL). Residues 76-689 (PLQPPPGLRW…QAVCEGTWNL (614 aa)) are Cytoplasmic-facing. 292–303 (IFTSGTTGLPKP) contacts AMP.

It belongs to the ATP-dependent AMP-binding enzyme family. In terms of tissue distribution, liver-specific (at protein level). In liver expressed in a periportal distribution.

The protein resides in the endoplasmic reticulum membrane. It is found in the microsome. Its subcellular location is the cell membrane. It carries out the reaction a fatty acid(in) = a fatty acid(out). The catalysed reaction is cholate + ATP + CoA = choloyl-CoA + AMP + diphosphate. The enzyme catalyses (25R)-3alpha,7alpha,12alpha-trihydroxy-5beta-cholestan-26-oate + ATP + CoA = (25R)-3alpha,7alpha,12alpha-trihydroxy-5beta-cholestan-26-oyl-CoA + AMP + diphosphate. It catalyses the reaction chenodeoxycholate + ATP + CoA = chenodeoxycholoyl-CoA + AMP + diphosphate. It carries out the reaction deoxycholate + ATP + CoA = deoxycholoyl-CoA + AMP + diphosphate. The catalysed reaction is lithocholate + ATP + CoA = lithocholoyl-CoA + AMP + diphosphate. The enzyme catalyses a very long-chain fatty acid + ATP + CoA = a very long-chain fatty acyl-CoA + AMP + diphosphate. It catalyses the reaction tetracosanoate + ATP + CoA = tetracosanoyl-CoA + AMP + diphosphate. It carries out the reaction hexacosanoate + ATP + CoA = hexacosanoyl-CoA + AMP + diphosphate. The catalysed reaction is a long-chain fatty acid + ATP + CoA = a long-chain fatty acyl-CoA + AMP + diphosphate. The enzyme catalyses octadecanoate + ATP + CoA = octadecanoyl-CoA + AMP + diphosphate. It catalyses the reaction eicosanoate + ATP + CoA = eicosanoyl-CoA + AMP + diphosphate. Mediates the import of long-chain fatty acids (LCFA) by facilitating their transport across cell membranes. Also catalyzes the ATP-dependent formation of fatty acyl-CoA using LCFA and very-long-chain fatty acids (VLCFA) as substrates. Mainly functions as a bile acyl-CoA synthetase catalyzing the activation of bile acids via ATP-dependent formation of bile acid CoA thioesters which is necessary for their subsequent conjugation with glycine or taurine. Both primary bile acids (cholic acid and chenodeoxycholic acid) and secondary bile acids (deoxycholic acid and lithocholic acid) are the principal substrates. In vitro, activates 3-alpha,7-alpha,12-alpha-trihydroxy-5-beta-cholestanate ((25R)-3alpha,7alpha,12alpha-trihydroxy-5beta-cholestan-26-oate or THCA), the C27 precursor of cholic acid deriving from the de novo synthesis from cholesterol. Plays an important role in hepatic fatty acid uptake and bile acid reconjugation and recycling but not in de novo synthesis of bile acids. This Mus musculus (Mouse) protein is Long-chain fatty acid transport protein 5 (Slc27a5).